The following is a 158-amino-acid chain: MKQLSFLPGEMTPQDRRLIQRALRALDRHLHEPGVAFTSTHAVREWLRLHMAALEREEFRVLYLDNQNQLIAHETLFTGTINRTEVHPREVVKRALHFNAAAVILAHNHPSGETTPSQADKTLTQRLVQVLQLVDIRVPDHLIVGGRQIYSFAEHGLL.

One can recognise an MPN domain in the interval 36–158; the sequence is AFTSTHAVRE…IYSFAEHGLL (123 aa). Zn(2+) is bound by residues H107, H109, and D120. The JAMM motif motif lies at 107–120; it reads HNHPSGETTPSQAD.

This sequence belongs to the UPF0758 family.

The chain is UPF0758 protein YkfG (ykfG) from Escherichia coli (strain K12).